Reading from the N-terminus, the 244-residue chain is 2,3-bisphosphoglycerate-dependent phosphoglycerate mutase (244 aa).

Residues 8-15 (RHGESNWN), 21-22 (TG), Arg60, 87-90 (ERHY), Lys98, 114-115 (RR), and 181-182 (GN) contribute to the substrate site. His9 functions as the Tele-phosphohistidine intermediate in the catalytic mechanism. The active-site Proton donor/acceptor is Glu87.

The protein belongs to the phosphoglycerate mutase family. BPG-dependent PGAM subfamily.

It carries out the reaction (2R)-2-phosphoglycerate = (2R)-3-phosphoglycerate. It functions in the pathway carbohydrate degradation; glycolysis; pyruvate from D-glyceraldehyde 3-phosphate: step 3/5. In terms of biological role, catalyzes the interconversion of 2-phosphoglycerate and 3-phosphoglycerate. This Frankia alni (strain DSM 45986 / CECT 9034 / ACN14a) protein is 2,3-bisphosphoglycerate-dependent phosphoglycerate mutase.